We begin with the raw amino-acid sequence, 328 residues long: tRNA uridine(34) hydroxylase (328 aa).

A Rhodanese domain is found at 130–224 (LDEDTVVLDT…YGKDPEVQGE (95 aa)). Cys-184 (cysteine persulfide intermediate) is an active-site residue.

The protein belongs to the TrhO family.

The catalysed reaction is uridine(34) in tRNA + AH2 + O2 = 5-hydroxyuridine(34) in tRNA + A + H2O. Catalyzes oxygen-dependent 5-hydroxyuridine (ho5U) modification at position 34 in tRNAs. In Streptococcus sanguinis (strain SK36), this protein is tRNA uridine(34) hydroxylase.